Reading from the N-terminus, the 863-residue chain is Receptor-like protein Cf-9 (863 aa).

An N-terminal signal peptide occupies residues methionine 1–serine 21. Over serine 22 to glutamine 812 the chain is Extracellular. The interval leucine 24–glutamine 91 is N-cap. Residues asparagine 48, asparagine 72, asparagine 109, asparagine 127, asparagine 142, asparagine 191, asparagine 204, and asparagine 212 are each glycosylated (N-linked (GlcNAc...) asparagine). An LRR 1; degenerate repeat occupies valine 92–leucine 115. LRR repeat units follow at residues serine 116–glutamate 139 and serine 141–leucine 164. One copy of the LRR 4; degenerate repeat lies at serine 165–asparagine 191. 22 LRR repeats span residues leucine 192–serine 214, serine 215–leucine 238, leucine 241–serine 263, alanine 265–histidine 287, leucine 288–leucine 312, asparagine 314–phenylalanine 335, glutamate 336–asparagine 358, threonine 359–leucine 382, glutamine 383–leucine 406, serine 408–serine 428, lysine 429–glutamine 452, asparagine 454–leucine 476, lysine 477–arginine 500, glutamate 502–valine 524, glycine 525–cysteine 549, tyrosine 551–tyrosine 572, leucine 573–asparagine 597, phenylalanine 599–asparagine 623, leucine 667–aspartate 690, leucine 691–asparagine 714, leucine 715–leucine 739, and phenylalanine 741–glycine 759. Asparagine 262 carries N-linked (GlcNAc...) asparagine glycosylation. N-linked (GlcNAc...) asparagine glycans are attached at residues asparagine 300 and asparagine 311. N-linked (GlcNAc...) asparagine glycans are attached at residues asparagine 378, asparagine 396, and asparagine 416. N-linked (GlcNAc...) asparagine glycosylation is present at asparagine 464. Asparagine 519 is a glycosylation site (N-linked (GlcNAc...) asparagine). Asparagine 563 carries an N-linked (GlcNAc...) asparagine glycan. N-linked (GlcNAc...) asparagine glycosylation is found at asparagine 698 and asparagine 714. 2 N-linked (GlcNAc...) asparagine glycosylation sites follow: asparagine 746 and asparagine 767. Residues lysine 760–glutamine 812 are C-cap/acidic domain. The chain crosses the membrane as a helical span at residues glycine 813–tryptophan 833. Over serine 834 to tyrosine 863 the chain is Cytoplasmic.

It belongs to the RLP family. In terms of assembly, interacts with thioredoxin-like protein CITRX.

It localises to the cell membrane. In terms of biological role, involved in plant defense. Confers resistance to the fungal pathogen C.fulvum through recognition of the AVR9 elicitor protein. The protein is Receptor-like protein Cf-9 of Solanum pimpinellifolium (Currant tomato).